Reading from the N-terminus, the 139-residue chain is Endoribonuclease YbeY (139 aa).

Residues histidine 110, histidine 114, and histidine 120 each contribute to the Zn(2+) site.

It belongs to the endoribonuclease YbeY family. It depends on Zn(2+) as a cofactor.

The protein localises to the cytoplasm. Its function is as follows. Single strand-specific metallo-endoribonuclease involved in late-stage 70S ribosome quality control and in maturation of the 3' terminus of the 16S rRNA. This chain is Endoribonuclease YbeY, found in Thermus thermophilus (strain ATCC BAA-163 / DSM 7039 / HB27).